We begin with the raw amino-acid sequence, 214 residues long: Insulin-like growth factor 2 (214 aa).

The tract at residues 48-79 (EVASAETLCGGELVDALQFVCEDRGFYFSRPT) is b. Disulfide bonds link Cys56/Cys97, Cys68/Cys110, and Cys96/Cys101. The tract at residues 80 to 90 (SRSNSRRSQNR) is c. Residues 91–111 (GIVEECCFRSCDLNLLEQYCA) are a. The d stretch occupies residues 112–117 (KPAKSE). Positions 118 to 214 (RDVSATSLQI…PPTDNYVSHN (97 aa)) are cleaved as a propeptide — e peptide.

Belongs to the insulin family.

It localises to the secreted. Functionally, the insulin-like growth factors, isolated from plasma, are structurally and functionally related to insulin but have a much higher growth-promoting activity. Acts as a ligand for integrin which is required for IGF2 signaling. The protein is Insulin-like growth factor 2 of Oncorhynchus mykiss (Rainbow trout).